Consider the following 202-residue polypeptide: MVNYPHNPIRQKVTPLQKQQKHKQVDFANRGMSFEASINATNAYYLAKGIAVIHKKPTPIQIVKVDYPRRSRAKIVEAYFKQASTTDYSGIYKGHYIDFEAKETRQKTAMPMKNFHAHQIEHMAAVLKQKGICFVLLHFATLKETYYLPAKALIDFYQIDRGNKSMPLDYIRKNGFEVKLGAFPQVPYLDIIEQKFLGGDYN.

Threonine 85, aspartate 87, glutamate 100, and glutamine 119 together coordinate Mg(2+).

Belongs to the RecU family. Requires Mg(2+) as cofactor.

Its subcellular location is the cytoplasm. The enzyme catalyses Endonucleolytic cleavage at a junction such as a reciprocal single-stranded crossover between two homologous DNA duplexes (Holliday junction).. Endonuclease that resolves Holliday junction intermediates in genetic recombination. Cleaves mobile four-strand junctions by introducing symmetrical nicks in paired strands. Promotes annealing of linear ssDNA with homologous dsDNA. Required for DNA repair, homologous recombination and chromosome segregation. This Streptococcus equi subsp. equi (strain 4047) protein is Holliday junction resolvase RecU.